The primary structure comprises 873 residues: Probable beta-glucosidase A (873 aa).

Positions 1–19 are cleaved as a signal peptide; it reads MRFGWLEVAALTAASVANA. 3 N-linked (GlcNAc...) asparagine glycosylation sites follow: asparagine 71, asparagine 222, and asparagine 263. Aspartate 291 is a catalytic residue. N-linked (GlcNAc...) asparagine glycosylation is found at asparagine 326, asparagine 333, asparagine 365, asparagine 453, asparagine 534, asparagine 553, asparagine 575, asparagine 679, and asparagine 725. The segment at 731–764 is disordered; that stretch reads DSSDDPNYGWEDSEYIPEGARDGSPQPLLKAGGA.

Belongs to the glycosyl hydrolase 3 family.

Its subcellular location is the secreted. The enzyme catalyses Hydrolysis of terminal, non-reducing beta-D-glucosyl residues with release of beta-D-glucose.. It participates in glycan metabolism; cellulose degradation. Its function is as follows. Beta-glucosidases are one of a number of cellulolytic enzymes involved in the degradation of cellulosic biomass. Catalyzes the last step releasing glucose from the inhibitory cellobiose. This chain is Probable beta-glucosidase A (bglA), found in Aspergillus fumigatus (strain CBS 144.89 / FGSC A1163 / CEA10) (Neosartorya fumigata).